The primary structure comprises 257 residues: Na(+)-translocating NADH-quinone reductase subunit C (257 aa).

The helical transmembrane segment at 13-33 (LTVVVLLSLICSLIVASAAVL) threads the bilayer. Thr224 carries the FMN phosphoryl threonine modification.

This sequence belongs to the NqrC family. Composed of six subunits; NqrA, NqrB, NqrC, NqrD, NqrE and NqrF. Requires FMN as cofactor.

Its subcellular location is the cell inner membrane. The catalysed reaction is a ubiquinone + n Na(+)(in) + NADH + H(+) = a ubiquinol + n Na(+)(out) + NAD(+). Functionally, NQR complex catalyzes the reduction of ubiquinone-1 to ubiquinol by two successive reactions, coupled with the transport of Na(+) ions from the cytoplasm to the periplasm. NqrA to NqrE are probably involved in the second step, the conversion of ubisemiquinone to ubiquinol. The polypeptide is Na(+)-translocating NADH-quinone reductase subunit C (Haemophilus ducreyi (strain 35000HP / ATCC 700724)).